Here is a 316-residue protein sequence, read N- to C-terminus: DNA-directed RNA polymerase subunit alpha (316 aa).

Positions 1–232 (MSGNDLFPST…DLFNPLHHCS (232 aa)) are alpha N-terminal domain (alpha-NTD). The alpha C-terminal domain (alpha-CTD) stretch occupies residues 247–316 (KINDILVEEL…LNIYLPKEKY (70 aa)).

The protein belongs to the RNA polymerase alpha chain family. In plastids the minimal PEP RNA polymerase catalytic core is composed of four subunits: alpha, beta, beta', and beta''. When a (nuclear-encoded) sigma factor is associated with the core the holoenzyme is formed, which can initiate transcription.

It is found in the plastid. The protein localises to the chloroplast. It catalyses the reaction RNA(n) + a ribonucleoside 5'-triphosphate = RNA(n+1) + diphosphate. Its function is as follows. DNA-dependent RNA polymerase catalyzes the transcription of DNA into RNA using the four ribonucleoside triphosphates as substrates. The protein is DNA-directed RNA polymerase subunit alpha of Mesostigma viride (Green alga).